A 509-amino-acid chain; its full sequence is Transcription factor SOX-9 (509 aa).

2 disordered regions span residues 1 to 66 (MNLL…ESEE) and 160 to 271 (RLRV…IDFR). Residues 27-41 (SEGSRGSPCPSGSGS) show a composition bias toward low complexity. Residues 42 to 52 (DTENTRPQENT) show a composition bias toward polar residues. 2 stretches are compositionally biased toward basic and acidic residues: residues 56–66 (GEPDLKKESEE) and 160–174 (RLRV…DYKY). The dimerization (DIM) stretch occupies residues 63–103 (ESEEDKFPVCIREAVSQVLKGYDWTLVPMPVRVNGSSKNKP). The tract at residues 63 to 103 (ESEEDKFPVCIREAVSQVLKGYDWTLVPMPVRVNGSSKNKP) is PQA. Residue S64 is modified to Phosphoserine. Residues 105–173 (VKRPMNAFMV…QHKKDHPDYK (69 aa)) constitute a DNA-binding region (HMG box). The residue at position 211 (S211) is a Phosphoserine. Positions 224-307 (PGEHSGQSQG…LPPNGHPGVP (84 aa)) are transactivation domain (TAM). Short sequence motifs (9aaTAD) lie at residues 275-284 (IGELSSDVIS) and 290-298 (DVNEFDQYL). 2 disordered regions span residues 335–415 (WMSK…QHSP) and 420–439 (YSPF…TRSQ). A compositionally biased stretch (pro residues) spans 341–359 (APPPPPHPPQQPPPVPQAP). Residues 360–369 (AQPQAALPQQ) are compositionally biased toward low complexity. Over residues 380-415 (HTLTTLSSEPGQSQRTHIKTEQLSPSHYSEQQQHSP) the composition is skewed to polar residues. The tract at residues 394-509 (RTHIKTEQLS…QPVYTQLTRP (116 aa)) is transactivation domain (TAC). A Glycyl lysine isopeptide (Lys-Gly) (interchain with G-Cter in ubiquitin) cross-link involves residue K398. Residues 460–468 (SVLYSTFTY) carry the 9aaTAD 3 motif. A disordered region spans residues 479–509 (PIADTSGVPSIPQTHSPQHWEQPVYTQLTRP). The span at 485 to 509 (GVPSIPQTHSPQHWEQPVYTQLTRP) shows a compositional bias: polar residues.

As to quaternary structure, homodimer; homodimerization is required for activity. Interacts (via C-terminus) with ZNF219; forming a complex that binds to the COL2A1 promoter and activates COL2A1 expression. Interacts with DDRGK1. Interacts with EP300/p300. Interacts with beta-catenin (CTNNB1); inhibiting CTNNB1 activity by competing with the binding sites of TCF/LEF within CTNNB1. In terms of processing, acetylated; acetylation impairs nuclear localization and ability to transactivate expression of target genes. Deacetylated by SIRT1. Phosphorylation at Ser-64 and Ser-211 by PKA increases transcriptional activity and may help delay chondrocyte maturation downstream of PTHLH/PTHrP signaling. Phosphorylation at either Ser-64 or Ser-211 is required for sumoylation, but phosphorylation is not dependent on sumoylation. Phosphorylated on tyrosine residues; tyrosine dephosphorylation by PTPN11/SHP2 blocks SOX9 phosphorylation by PKA and subsequent SUMOylation. Post-translationally, sumoylated; phosphorylation at either Ser-64 or Ser-211 is required for sumoylation. Sumoylation is induced by BMP signaling pathway. In terms of processing, ubiquitinated; ubiquitination leads to proteasomal degradation and is negatively regulated by DDRGK1.

It localises to the nucleus. Its function is as follows. Transcription factor that plays a key role in chondrocytes differentiation and skeletal development. Specifically binds the 5'-ACAAAG-3' DNA motif present in enhancers and super-enhancers and promotes expression of genes important for chondrogenesis, including cartilage matrix protein-coding genes COL2A1, COL4A2, COL9A1, COL11A2 and ACAN, SOX5 and SOX6. Also binds to some promoter regions. Plays a central role in successive steps of chondrocyte differentiation. Absolutely required for precartilaginous condensation, the first step in chondrogenesis during which skeletal progenitors differentiate into prechondrocytes. Together with SOX5 and SOX6, required for overt chondrogenesis when condensed prechondrocytes differentiate into early stage chondrocytes, the second step in chondrogenesis. Later, required to direct hypertrophic maturation and block osteoblast differentiation of growth plate chondrocytes: maintains chondrocyte columnar proliferation, delays prehypertrophy and then prevents osteoblastic differentiation of chondrocytes by lowering beta-catenin (CTNNB1) signaling and RUNX2 expression. Also required for chondrocyte hypertrophy, both indirectly, by keeping the lineage fate of chondrocytes, and directly, by remaining present in upper hypertrophic cells and transactivating COL10A1 along with MEF2C. Low lipid levels are the main nutritional determinant for chondrogenic commitment of skeletal progenitor cells: when lipids levels are low, FOXO (FOXO1 and FOXO3) transcription factors promote expression of SOX9, which induces chondrogenic commitment and suppresses fatty acid oxidation. Mechanistically, helps, but is not required, to remove epigenetic signatures of transcriptional repression and deposit active promoter and enhancer marks at chondrocyte-specific genes. Acts in cooperation with the Hedgehog pathway-dependent GLI (GLI1 and GLI3) transcription factors. In addition to cartilage development, also acts as a regulator of proliferation and differentiation in epithelial stem/progenitor cells: involved in the lung epithelium during branching morphogenesis, by balancing proliferation and differentiation and regulating the extracellular matrix. Controls epithelial branching during kidney development. In Sus scrofa (Pig), this protein is Transcription factor SOX-9 (SOX9).